Reading from the N-terminus, the 179-residue chain is Peptidyl-tRNA hydrolase 2, mitochondrial (179 aa).

Residues 10–32 (YLTNPGALSLAAGVACGVCLGWG) form a helical membrane-spanning segment. Glycyl lysine isopeptide (Lys-Gly) (interchain with G-Cter in ubiquitin) cross-links involve residues Lys-76, Lys-81, Lys-95, Lys-106, Lys-115, Lys-171, and Lys-177.

This sequence belongs to the PTH2 family. In terms of assembly, monomer. Post-translationally, ubiquitinated by PRKN during mitophagy, leading to its degradation and enhancement of mitophagy. Deubiquitinated by USP30.

The protein localises to the mitochondrion outer membrane. The enzyme catalyses an N-acyl-L-alpha-aminoacyl-tRNA + H2O = an N-acyl-L-amino acid + a tRNA + H(+). Its function is as follows. Peptidyl-tRNA hydrolase which releases tRNAs from the ribosome during protein synthesis. Promotes caspase-independent apoptosis by regulating the function of two transcriptional regulators, AES and TLE1. The polypeptide is Peptidyl-tRNA hydrolase 2, mitochondrial (PTRH2) (Bos taurus (Bovine)).